The sequence spans 498 residues: ATP synthase subunit beta, chloroplastic (498 aa).

An ATP-binding site is contributed by 172 to 179; it reads GGAGVGKT.

Belongs to the ATPase alpha/beta chains family. As to quaternary structure, F-type ATPases have 2 components, CF(1) - the catalytic core - and CF(0) - the membrane proton channel. CF(1) has five subunits: alpha(3), beta(3), gamma(1), delta(1), epsilon(1). CF(0) has four main subunits: a(1), b(1), b'(1) and c(9-12).

The protein resides in the plastid. The protein localises to the chloroplast thylakoid membrane. The enzyme catalyses ATP + H2O + 4 H(+)(in) = ADP + phosphate + 5 H(+)(out). Its function is as follows. Produces ATP from ADP in the presence of a proton gradient across the membrane. The catalytic sites are hosted primarily by the beta subunits. The sequence is that of ATP synthase subunit beta, chloroplastic from Balaka seemannii.